We begin with the raw amino-acid sequence, 288 residues long: ATP synthase gamma chain (288 aa).

The protein belongs to the ATPase gamma chain family. F-type ATPases have 2 components, CF(1) - the catalytic core - and CF(0) - the membrane proton channel. CF(1) has five subunits: alpha(3), beta(3), gamma(1), delta(1), epsilon(1). CF(0) has three main subunits: a, b and c.

It localises to the cell inner membrane. In terms of biological role, produces ATP from ADP in the presence of a proton gradient across the membrane. The gamma chain is believed to be important in regulating ATPase activity and the flow of protons through the CF(0) complex. This chain is ATP synthase gamma chain, found in Haemophilus ducreyi (strain 35000HP / ATCC 700724).